A 173-amino-acid chain; its full sequence is Regulatory protein RecX (173 aa).

Belongs to the RecX family.

It localises to the cytoplasm. Its function is as follows. Modulates RecA activity. This chain is Regulatory protein RecX, found in Mycobacterium marinum (strain ATCC BAA-535 / M).